We begin with the raw amino-acid sequence, 211 residues long: 3-demethoxyubiquinol 3-hydroxylase (211 aa).

6 residues coordinate Fe cation: glutamate 60, glutamate 90, histidine 93, glutamate 142, glutamate 174, and histidine 177.

The protein belongs to the COQ7 family. Fe cation serves as cofactor.

The protein resides in the cell membrane. The catalysed reaction is a 5-methoxy-2-methyl-3-(all-trans-polyprenyl)benzene-1,4-diol + AH2 + O2 = a 3-demethylubiquinol + A + H2O. The protein operates within cofactor biosynthesis; ubiquinone biosynthesis. Functionally, catalyzes the hydroxylation of 2-nonaprenyl-3-methyl-6-methoxy-1,4-benzoquinol during ubiquinone biosynthesis. The sequence is that of 3-demethoxyubiquinol 3-hydroxylase from Francisella tularensis subsp. holarctica (strain FTNF002-00 / FTA).